We begin with the raw amino-acid sequence, 152 residues long: Superoxide dismutase [Cu-Zn] (152 aa).

The Cu cation site is built by His-45, His-47, and His-62. Residues Cys-56 and Cys-145 are joined by a disulfide bond. Residues His-62, His-70, His-79, and Asp-82 each coordinate Zn(2+). Position 119 (His-119) interacts with Cu cation.

The protein belongs to the Cu-Zn superoxide dismutase family. In terms of assembly, homodimer. It depends on Cu cation as a cofactor. The cofactor is Zn(2+).

It is found in the cytoplasm. It carries out the reaction 2 superoxide + 2 H(+) = H2O2 + O2. Its function is as follows. Destroys radicals which are normally produced within the cells and which are toxic to biological systems. This is Superoxide dismutase [Cu-Zn] (SODCC) from Capsicum annuum (Capsicum pepper).